We begin with the raw amino-acid sequence, 203 residues long: Ras-like protein family member 10B (203 aa).

Positions 1–203 (MVSTYRVAVL…ALRRNRCAIM (203 aa)) are small GTPase-like. GTP is bound at residue 11-18 (GARGVGKS). Positions 33–42 (CVPTTARRLY) match the Effector region motif. GTP is bound by residues 59–62 (DFPP) and 128–131 (NKRD). Residue cysteine 200 is modified to Cysteine methyl ester. Cysteine 200 carries S-geranylgeranyl cysteine lipidation. A propeptide spans 201 to 203 (AIM) (removed in mature form).

This sequence belongs to the small GTPase superfamily. Ras family. Interacts with CADPS. In terms of tissue distribution, expressed at high levels in skeletal muscle and, at much lower levels, in heart, brain and pancreas.

It is found in the cell membrane. The catalysed reaction is GTP + H2O = GDP + phosphate + H(+). In terms of biological role, may facilitate the release of atrial natriuretic peptide by cardiomyocytes and hence play a role in the regulation of arterial pressure. The sequence is that of Ras-like protein family member 10B (RASL10B) from Homo sapiens (Human).